The sequence spans 551 residues: Bestrophin-1 (551 aa).

The Cytoplasmic portion of the chain corresponds to 1 to 31; sequence MTITYTNKVANARLGSFSSLLLCWRGSIYKL. Residue A10 coordinates Ca(2+). A helical transmembrane segment spans residues 32–51; it reads LYGEFLVFIFLYYSIRGLYR. At 52-60 the chain is on the extracellular side; that stretch reads MVLSSDQQL. Residues 61–82 traverse the membrane as a helical segment; it reads LFEKLALYCDSYIQLIPISFVL. Over 83–237 the chain is Cytoplasmic; it reads GFYVTLVVSR…DWISIPLVYT (155 aa). Residues 238-255 form a helical membrane-spanning segment; it reads QVVTVAVYSFFLACLIGR. Over 256–274 the chain is Extracellular; that stretch reads QFLNPNKDYPGHEMDLVVP. A helical membrane pass occupies residues 275–288; the sequence is VFTILQFLFYMGWL. At 289 to 551 the chain is on the cytoplasmic side; that stretch reads KVAEQLINPF…EAGTKPVLYE (263 aa). Residues Q293, N296, D301, and D304 each contribute to the Ca(2+) site. The auto-inhibitory segment stretch occupies residues 346–379; sequence PYTAASARSRRHSFMGSTFNISLKKEDLELWSKE. Residues 459–489 form a disordered region; that stretch reads SHCGPQAPSSHPTEQSAPSSSDTGDGPSTDY. Residues 465–475 are compositionally biased toward polar residues; that stretch reads APSSHPTEQSA. Residues 476–488 show a composition bias toward low complexity; sequence PSSSDTGDGPSTD.

It belongs to the anion channel-forming bestrophin (TC 1.A.46) family. Calcium-sensitive chloride channel subfamily. Interacts with YWHAG; this interaction promotes the ligand-gated L-glutamate channel activity leading to the positive regulation of NMDA glutamate receptor activity through the L-glutamate secretion.

Its subcellular location is the cell membrane. The protein resides in the basolateral cell membrane. The catalysed reaction is 4-aminobutanoate(in) = 4-aminobutanoate(out). The enzyme catalyses L-glutamate(out) = L-glutamate(in). It catalyses the reaction chloride(in) = chloride(out). It carries out the reaction hydrogencarbonate(in) = hydrogencarbonate(out). The catalysed reaction is D-serine(in) = D-serine(out). With respect to regulation, inactivated by sulfhydryl-reactive agents. Ligand-gated anion channel that allows the movement of anions across cell membranes when activated by calcium (Ca2+). Allows the movement of chloride and hydrogencarbonate. Found in a partially open conformation leading to significantly smaller chloride movement. Upon F2R/PAR-1 activation, the sequestered calcium is released into the cytosol of astrocytes, leading to the (Ca2+)-dependent release of L-glutamate into the synaptic cleft that targets the neuronal postsynaptic GRIN2A/NMDAR receptor resulting in the synaptic plasticity regulation. Upon activation of the norepinephrine-alpha-1 adrenergic receptor signaling pathway, transports as well D-serine than L-glutamate in a (Ca2+)-dependent manner, leading to activation of adjacent NMDAR receptors and therefore regulates the heterosynaptic long-term depression and metaplasticity during initial memory acquisition. Releases the 4-aminobutanoate neurotransmitter in a (Ca2+)-dependent manner, and participates in its tonic release from cerebellar glial cells. This chain is Bestrophin-1, found in Mus musculus (Mouse).